Here is a 634-residue protein sequence, read N- to C-terminus: Factor of DNA methylation 5 (634 aa).

Residues 254–469 adopt a coiled-coil conformation; sequence IVVDDLANKI…EDTNSALMVK (216 aa).

Functionally, acts in association with FDM3 and FDM4 for RNA-directed DNA methylation (RdDM). The protein is Factor of DNA methylation 5 of Arabidopsis thaliana (Mouse-ear cress).